The primary structure comprises 503 residues: Medium/long-chain-fatty-acid--CoA ligase FadD17 (503 aa).

The protein belongs to the ATP-dependent AMP-binding enzyme family.

The enzyme catalyses a medium-chain fatty acid + ATP + CoA = a medium-chain fatty acyl-CoA + AMP + diphosphate. It catalyses the reaction a long-chain fatty acid + ATP + CoA = a long-chain fatty acyl-CoA + AMP + diphosphate. The protein operates within lipid metabolism; fatty acid biosynthesis. Its function is as follows. Catalyzes the activation of medium/long-chain fatty acids as acyl-coenzyme A (acyl-CoA), which are then transferred to the multifunctional polyketide synthase (PKS) type III for further chain extension. The chain is Medium/long-chain-fatty-acid--CoA ligase FadD17 (fadD17) from Mycobacterium marinum (strain ATCC BAA-535 / M).